The following is a 479-amino-acid chain: Protein C-ets-2 (479 aa).

The region spanning 88-173 (DTFSGFTKEQ…EHLEQMIKDS (86 aa)) is the PNT domain. A DNA-binding region (ETS) is located at residues 373 to 453 (IQLWQFLLEL…SGKRYVYRFV (81 aa)).

This sequence belongs to the ETS family.

The protein resides in the nucleus. Functionally, probable transcription factor. In Gallus gallus (Chicken), this protein is Protein C-ets-2 (ETS2).